Here is a 339-residue protein sequence, read N- to C-terminus: RNA polymerase principal sigma factor HrdC (339 aa).

Low complexity predominate over residues 1 to 10; the sequence is MAPTARTPTA. Disordered regions lie at residues 1–37 and 71–101; these read MAPT…EEPD and REEL…DGQE. A compositionally biased stretch (basic and acidic residues) spans 91-101; it reads TLEETVHDGQE. The Polymerase core binding signature appears at 130-143; that stretch reads DVIQEGNLGLIRAV. Residues 300-319 constitute a DNA-binding region (H-T-H motif); the sequence is LQQVAQHVGLTRERVRQLEK.

Belongs to the sigma-70 factor family. As to quaternary structure, interacts transiently with the RNA polymerase catalytic core.

Functionally, sigma factors are initiation factors that promote the attachment of RNA polymerase to specific initiation sites and are then released. The sequence is that of RNA polymerase principal sigma factor HrdC (hrdC) from Streptomyces coelicolor (strain ATCC BAA-471 / A3(2) / M145).